A 312-amino-acid chain; its full sequence is Olfactory receptor 7D4 (312 aa).

Residues 1–25 (MEAENLTELSKFLLLGLSDDPELQP) lie on the Extracellular side of the membrane. Asn-5 is a glycosylation site (N-linked (GlcNAc...) asparagine). The chain crosses the membrane as a helical span at residues 26 to 46 (VLFGLFLSMYLVTVLGNLLII). At 47-54 (LAVSSDSH) the chain is on the cytoplasmic side. A helical membrane pass occupies residues 55–75 (LHTPMYFFLSNLSFVDICFIS). Residues 76–99 (TTVPKMLVSIQARSKDISYMGCLT) lie on the Extracellular side of the membrane. Cys-97 and Cys-189 are oxidised to a cystine. Residues 100–120 (QVYFLMMFAGMDTFLLAVMAY) traverse the membrane as a helical segment. The Cytoplasmic portion of the chain corresponds to 121–139 (DRFVAICHPLHYTVIMNPC). The chain crosses the membrane as a helical span at residues 140-160 (LCGLLVLASWFIIFWFSLVHI). Over 161–197 (LLMKRLTFSTGTEIPHFFCEPAQVLKVACSNTLLNNI) the chain is Extracellular. The chain crosses the membrane as a helical span at residues 198 to 217 (VLYVATALLGVFPVAGILFS). At 218 to 237 (YSQIVSSLMGMSSTKGKYKA) the chain is on the cytoplasmic side. The chain crosses the membrane as a helical span at residues 238 to 258 (FSTCGSHLCVVSLFYGTGLGV). Topologically, residues 259 to 271 (YLSSAVTHSSQSS) are extracellular. The chain crosses the membrane as a helical span at residues 272–292 (STASVMYAMVTPMLNPFIYSL). Topologically, residues 293 to 312 (RNKDVKGALERLLSRADSCP) are cytoplasmic.

This sequence belongs to the G-protein coupled receptor 1 family. As to expression, nasal olfactory epithelium.

Its subcellular location is the cell membrane. Functionally, odorant receptor. Selectively activated by androstenone and the related odorous steroid androstadienone. The sequence is that of Olfactory receptor 7D4 (OR7D4) from Homo sapiens (Human).